A 367-amino-acid chain; its full sequence is UDP-N-acetylglucosamine--N-acetylmuramyl-(pentapeptide) pyrophosphoryl-undecaprenol N-acetylglucosamine transferase (367 aa).

UDP-N-acetyl-alpha-D-glucosamine is bound by residues 15 to 17 (TGG), asparagine 127, arginine 163, serine 191, isoleucine 249, and glutamine 294.

This sequence belongs to the glycosyltransferase 28 family. MurG subfamily.

Its subcellular location is the cell inner membrane. It catalyses the reaction di-trans,octa-cis-undecaprenyl diphospho-N-acetyl-alpha-D-muramoyl-L-alanyl-D-glutamyl-meso-2,6-diaminopimeloyl-D-alanyl-D-alanine + UDP-N-acetyl-alpha-D-glucosamine = di-trans,octa-cis-undecaprenyl diphospho-[N-acetyl-alpha-D-glucosaminyl-(1-&gt;4)]-N-acetyl-alpha-D-muramoyl-L-alanyl-D-glutamyl-meso-2,6-diaminopimeloyl-D-alanyl-D-alanine + UDP + H(+). Its pathway is cell wall biogenesis; peptidoglycan biosynthesis. Functionally, cell wall formation. Catalyzes the transfer of a GlcNAc subunit on undecaprenyl-pyrophosphoryl-MurNAc-pentapeptide (lipid intermediate I) to form undecaprenyl-pyrophosphoryl-MurNAc-(pentapeptide)GlcNAc (lipid intermediate II). This chain is UDP-N-acetylglucosamine--N-acetylmuramyl-(pentapeptide) pyrophosphoryl-undecaprenol N-acetylglucosamine transferase, found in Burkholderia mallei (strain NCTC 10247).